The primary structure comprises 80 residues: Progonadoliberin-1 (80 aa).

The signal sequence occupies residues 1 to 21 (MGIKRALWWMVVCVVVLQVSA). Residue Q22 is modified to Pyrrolidone carboxylic acid. G31 is subject to Glycine amide.

It belongs to the GnRH family.

The protein resides in the secreted. Stimulates the secretion of gonadotropins. The protein is Progonadoliberin-1 (gnrh1) of Clarias gariepinus (North African catfish).